A 191-amino-acid chain; its full sequence is Putative inactive glutathione hydrolase 4 (191 aa).

The active-site Nucleophile is the Thr-54. L-glutamate contacts are provided by residues Thr-72, Asn-74, Glu-93, Asp-96, 126 to 127, and 147 to 148; these read SS and GG.

This sequence belongs to the gamma-glutamyltransferase family. Expressed at low levels in embryo, roots and leaves. In mature plants, expression is restricted to vascular tissues of roots, leaves, flowers and siliques.

This chain is Putative inactive glutathione hydrolase 4 (GGT4), found in Arabidopsis thaliana (Mouse-ear cress).